The primary structure comprises 352 residues: Phosphoribosylformylglycinamidine cyclo-ligase (352 aa).

The protein belongs to the AIR synthase family.

It localises to the cytoplasm. The catalysed reaction is 2-formamido-N(1)-(5-O-phospho-beta-D-ribosyl)acetamidine + ATP = 5-amino-1-(5-phospho-beta-D-ribosyl)imidazole + ADP + phosphate + H(+). Its pathway is purine metabolism; IMP biosynthesis via de novo pathway; 5-amino-1-(5-phospho-D-ribosyl)imidazole from N(2)-formyl-N(1)-(5-phospho-D-ribosyl)glycinamide: step 2/2. In Coxiella burnetii (strain RSA 331 / Henzerling II), this protein is Phosphoribosylformylglycinamidine cyclo-ligase.